Consider the following 207-residue polypeptide: LexA repressor (207 aa).

The H-T-H motif DNA-binding region spans 28 to 48 (RAEIASRLGFKSANAAEEHLK). Residues serine 124 and lysine 161 each act as for autocatalytic cleavage activity in the active site.

This sequence belongs to the peptidase S24 family. As to quaternary structure, homodimer.

It catalyses the reaction Hydrolysis of Ala-|-Gly bond in repressor LexA.. Functionally, represses a number of genes involved in the response to DNA damage (SOS response), including recA and lexA. In the presence of single-stranded DNA, RecA interacts with LexA causing an autocatalytic cleavage which disrupts the DNA-binding part of LexA, leading to derepression of the SOS regulon and eventually DNA repair. This is LexA repressor from Shewanella amazonensis (strain ATCC BAA-1098 / SB2B).